The following is a 954-amino-acid chain: MTQNLQMADRFDSSAVEQALYKHWEEQGYFKPTENPSLPSYCIAIPPPNVTGSLHMGHAFQQTLMDTLIRFNRMEGNNTLWQTGTDHAGIATQMVVERKIAAEEGKTRHDYGREAFINKIWDWKAYSGGTISQQMRRLGNSIDWDRERFTMDEGLSNAVKEVFVRLHEEGLIYRGKRLVNWDPKLHTAISDLEVENKESKGSLWHFRYPLANGAKTADGKDYLVVATTRPETVLGDTAVAVHPEDERYQSLIGKTVVLPLANREIPIVADEYVDREFGTGVVKITPAHDFNDYEVGKRHGLPMVNVMTMNADIRAEAEIIGTDGKPLTTYEAKIPADYQGLERFAARKKVVADFEALGLLDEIKPHDLKVPYGDRGGVPIEPMLTDQWYVSVKPLAEVATKAVEDGEIQFVPKQYENLYFSWMRDIQDWCISRQLWWGHRIPAWYDEAGNVYVARSEEEVRQKHNLPADLALRQDEDVLDTWFSSGLWTFSTLGWPEQTKELKMFHPTDVLITGFDIIFFWVARMIMFTMHFVKDENGKPQVPFKTVYVTGLIRDEQGQKMSKSKGNVLDPIDMIDGISLEDLLEKRTGNMMQPQLAEKIAKATRKEFENGIAAHGTDALRFTLAALASNGRDINWDMKRLEGYRNFCNKLWNASRFVLTNDKLDLSAGEVEYSLADRWIESKFNRTVGEFREALSQYRFDLAANAIYDFTWNEFCDWYLELTKPVFANGTEAQKRGASQTLVRVLEKLLRLAHPIMPFITEEIWQKVKGFAGIDADTIMLQPFPKVVKSELDESAEMQIGWIKELIIAVRNIRAESNIAPSKGLEFLVRNVSDEQRKILAENDRLLKAMAKLDSVQVLSADETAPLSVAKLVGNVEVLIPMAGFINKEAELARLTKEIEKMRGEITRIENKLGNEAFVAKAPEAVIAKEREKMQEYQNGLEKLQTQYQAIENL.

Positions 48–58 (PNVTGSLHMGH) match the 'HIGH' region motif. Positions 560–564 (KMSKS) match the 'KMSKS' region motif. Lys-563 is an ATP binding site. Residues 883–954 (AGFINKEAEL…QTQYQAIENL (72 aa)) are a coiled coil.

The protein belongs to the class-I aminoacyl-tRNA synthetase family. ValS type 1 subfamily. As to quaternary structure, monomer.

It localises to the cytoplasm. The catalysed reaction is tRNA(Val) + L-valine + ATP = L-valyl-tRNA(Val) + AMP + diphosphate. Its function is as follows. Catalyzes the attachment of valine to tRNA(Val). As ValRS can inadvertently accommodate and process structurally similar amino acids such as threonine, to avoid such errors, it has a 'posttransfer' editing activity that hydrolyzes mischarged Thr-tRNA(Val) in a tRNA-dependent manner. In Actinobacillus pleuropneumoniae serotype 3 (strain JL03), this protein is Valine--tRNA ligase.